The primary structure comprises 191 residues: Ribosomal RNA small subunit methyltransferase G (191 aa).

S-adenosyl-L-methionine contacts are provided by residues Gly62, Phe67, Ile111–Glu112, and Arg124.

This sequence belongs to the methyltransferase superfamily. RNA methyltransferase RsmG family.

It localises to the cytoplasm. It catalyses the reaction guanosine(527) in 16S rRNA + S-adenosyl-L-methionine = N(7)-methylguanosine(527) in 16S rRNA + S-adenosyl-L-homocysteine. Its function is as follows. Specifically methylates the N7 position of guanine in position 527 of 16S rRNA. The protein is Ribosomal RNA small subunit methyltransferase G of Rickettsia typhi (strain ATCC VR-144 / Wilmington).